The following is a 295-amino-acid chain: Nitrogenase iron protein 1 (295 aa).

Residue 12–19 coordinates ATP; it reads GKGGIGKS. [4Fe-4S] cluster is bound at residue Cys100. At Arg103 the chain carries ADP-ribosylarginine; by dinitrogenase reductase ADP-ribosyltransferase. Residue Cys134 coordinates [4Fe-4S] cluster.

The protein belongs to the NifH/BchL/ChlL family. Homodimer. It depends on [4Fe-4S] cluster as a cofactor. In terms of processing, the reversible ADP-ribosylation of Arg-103 inactivates the nitrogenase reductase and regulates nitrogenase activity.

The catalysed reaction is N2 + 8 reduced [2Fe-2S]-[ferredoxin] + 16 ATP + 16 H2O = H2 + 8 oxidized [2Fe-2S]-[ferredoxin] + 2 NH4(+) + 16 ADP + 16 phosphate + 6 H(+). Its function is as follows. The key enzymatic reactions in nitrogen fixation are catalyzed by the nitrogenase complex, which has 2 components: the iron protein and the molybdenum-iron protein. In Mastigocladus laminosus (Fischerella sp.), this protein is Nitrogenase iron protein 1 (nifH1).